The sequence spans 296 residues: MNTKKEEVVSSPEATVEKKQTQSQTPIVSRDKLLEAGAYFGHKKQMWHPKMKEFIVPKRLNKNAHIIDIVKTQKYLEFAYSLVEKLAAKGVSFIFVGTKRQAKKTVKEAAERTNSLYVSERWLGGTLTNNSVIMKRVQKMNELDKKAEQGFKGYTKKEALLLQKQLDKLHQNLDGIKNMRRLPQVMIVTDLVEDKIAIQEAKKKKIKIIGIVDTNVDPTVIDFGIPANDDSSKSINLIVNILADAIAKTQGKKQMYAYQPDDKIVLSNPHELKKSEEASEVKAASTKEKLTEEASQ.

2 disordered regions span residues 1–24 (MNTK…TQSQ) and 270–296 (HELK…EASQ).

It belongs to the universal ribosomal protein uS2 family.

The protein is Small ribosomal subunit protein uS2 of Mycoplasmopsis synoviae (strain 53) (Mycoplasma synoviae).